A 314-amino-acid chain; its full sequence is ATP synthase gamma chain (314 aa).

The protein belongs to the ATPase gamma chain family. F-type ATPases have 2 components, CF(1) - the catalytic core - and CF(0) - the membrane proton channel. CF(1) has five subunits: alpha(3), beta(3), gamma(1), delta(1), epsilon(1). CF(0) has three main subunits: a, b and c.

It is found in the cell membrane. In terms of biological role, produces ATP from ADP in the presence of a proton gradient across the membrane. The gamma chain is believed to be important in regulating ATPase activity and the flow of protons through the CF(0) complex. This Limosilactobacillus reuteri (strain DSM 20016) (Lactobacillus reuteri) protein is ATP synthase gamma chain.